Consider the following 683-residue polypeptide: Long-chain-fatty-acid--CoA ligase 5 (683 aa).

A helical; Signal-anchor for type III membrane protein transmembrane segment spans residues 12–32 (LPTPALICILTFGAAIFLWLI). Isoleucine 32 bears the Phosphoserine mark. Topologically, residues 33–683 (TRPQPVLPLL…IDSLYEHIQD (651 aa)) are cytoplasmic. An N6-acetyllysine modification is found at lysine 361.

Belongs to the ATP-dependent AMP-binding enzyme family. Mg(2+) is required as a cofactor.

The protein resides in the mitochondrion. Its subcellular location is the endoplasmic reticulum. It is found in the mitochondrion outer membrane. The protein localises to the endoplasmic reticulum membrane. It localises to the cell membrane. The catalysed reaction is a long-chain fatty acid + ATP + CoA = a long-chain fatty acyl-CoA + AMP + diphosphate. It carries out the reaction (5Z,8Z,11Z,14Z)-eicosatetraenoate + ATP + CoA = (5Z,8Z,11Z,14Z)-eicosatetraenoyl-CoA + AMP + diphosphate. It catalyses the reaction hexadecanoate + ATP + CoA = hexadecanoyl-CoA + AMP + diphosphate. The enzyme catalyses (E)-hexadec-2-enoate + ATP + CoA = (2E)-hexadecenoyl-CoA + AMP + diphosphate. The catalysed reaction is 15-hydroxy-(5Z,8Z,11Z,13E)-eicosatetraenoate + ATP + CoA = 15-hydroxy-(5Z,8Z,11Z,13E)-eicosatetraenoyl-CoA + AMP + diphosphate. It carries out the reaction 12-hydroxy-(5Z,8Z,10E,14Z)-eicosatetraenoate + ATP + CoA = 12-hydroxy-(5Z,8Z,10E,14Z)-eicosatetraenoyl-CoA + AMP + diphosphate. It catalyses the reaction 5-hydroxy-(6E,8Z,11Z,14Z)-eicosatetraenoate + ATP + CoA = 5-hydroxy-(6E,8Z,11Z,14Z)-eicosatetraenoyl-CoA + AMP + diphosphate. The enzyme catalyses 14,15-epoxy-(5Z,8Z,11Z)-eicosatrienoate + ATP + CoA = 14,15-epoxy-(5Z,8Z,11Z)-eicosatrienoyl-CoA + AMP + diphosphate. The catalysed reaction is 11,12-epoxy-(5Z,8Z,14Z)-eicosatrienoate + ATP + CoA = 11,12-epoxy-(5Z,8Z,14Z)-eicosatrienoyl-CoA + AMP + diphosphate. It carries out the reaction (9Z)-octadecenoate + ATP + CoA = (9Z)-octadecenoyl-CoA + AMP + diphosphate. In terms of biological role, catalyzes the conversion of long-chain fatty acids to their active form acyl-CoAs for both synthesis of cellular lipids, and degradation via beta-oxidation. ACSL5 may activate fatty acids from exogenous sources for the synthesis of triacylglycerol destined for intracellular storage. Utilizes a wide range of saturated fatty acids with a preference for C16-C18 unsaturated fatty acids. It was suggested that it may also stimulate fatty acid oxidation. At the villus tip of the crypt-villus axis of the small intestine may sensitize epithelial cells to apoptosis specifically triggered by the death ligand TRAIL. May have a role in the survival of glioma cells. The chain is Long-chain-fatty-acid--CoA ligase 5 from Homo sapiens (Human).